We begin with the raw amino-acid sequence, 85 residues long: Small ribosomal subunit protein bS16c (85 aa).

This sequence belongs to the bacterial ribosomal protein bS16 family.

It is found in the plastid. The protein resides in the chloroplast. The protein is Small ribosomal subunit protein bS16c of Nicotiana tabacum (Common tobacco).